The sequence spans 86 residues: MNYFVLIAVACLLTAGTESKKDGYPLEYDNCAYDCLGYDNKKCDKLCKDKKADSGYCYWAHILCYCYGLPDNEPIKTSGRCRPGKK.

Residues 1-19 form the signal peptide; it reads MNYFVLIAVACLLTAGTES. The LCN-type CS-alpha/beta domain occupies 21–82; the sequence is KDGYPLEYDN…EPIKTSGRCR (62 aa). 4 disulfide bridges follow: C31–C81, C35–C57, C43–C64, and C47–C66. At P83 the chain carries Proline amide.

Belongs to the long (4 C-C) scorpion toxin superfamily. Sodium channel inhibitor family. Alpha subfamily. In terms of tissue distribution, expressed by the venom gland.

The protein localises to the secreted. Alpha toxins bind voltage-independently at site-3 of sodium channels (Nav) and inhibit the inactivation of the activated channels, thereby blocking neuronal transmission. The protein is Toxin Tpa4 of Tityus pachyurus (Colombian scorpion).